Here is a 730-residue protein sequence, read N- to C-terminus: Arginine decarboxylase 1B, chloroplastic (730 aa).

A chloroplast-targeting transit peptide spans 1 to 37 (MPALGCCVDAAVSPPPGYSFLWDSSLPAPEIFPSGVP). Residue Lys157 is modified to N6-(pyridoxal phosphate)lysine. Pyridoxal 5'-phosphate-binding positions include Ser309, Gly346, and 395 to 398 (ESGR). 460–461 (YA) contacts substrate. The active-site Proton donor; shared with dimeric partner is the Cys548. Asp549 serves as a coordination point for substrate. Residue Tyr590 coordinates pyridoxal 5'-phosphate.

It belongs to the Orn/Lys/Arg decarboxylase class-II family. SpeA subfamily. The cofactor is Mg(2+). Requires pyridoxal 5'-phosphate as cofactor.

Its subcellular location is the plastid. The protein resides in the chloroplast. It carries out the reaction L-arginine + H(+) = agmatine + CO2. The protein operates within alkaloid biosynthesis; nicotine biosynthesis. It participates in amine and polyamine biosynthesis; agmatine biosynthesis; agmatine from L-arginine: step 1/1. Its function is as follows. Involved in the biosynthesis of pyridine alkaloid natural products, leading mainly to the production of anabasine, anatabine, nicotine and nornicotine, effective deterrents against herbivores with antiparasitic and pesticide properties (neurotoxins); nornicotine serves as the precursor in the synthesis of the carcinogen compound N'-nitrosonornicotine (NNN). Required for the biosynthesis of putrescine. Catalyzes the first step of polyamine (PA) biosynthesis to produce putrescine from arginine. This is Arginine decarboxylase 1B, chloroplastic from Nicotiana tabacum (Common tobacco).